Reading from the N-terminus, the 166-residue chain is Large ribosomal subunit protein bL9 (166 aa).

It belongs to the bacterial ribosomal protein bL9 family.

In terms of biological role, binds to the 23S rRNA. The polypeptide is Large ribosomal subunit protein bL9 (Psychrobacter arcticus (strain DSM 17307 / VKM B-2377 / 273-4)).